Reading from the N-terminus, the 459-residue chain is Putrescine aminotransferase (459 aa).

Residues 150–151 and Q274 each bind pyridoxal 5'-phosphate; that span reads GT. The residue at position 300 (K300) is an N6-(pyridoxal phosphate)lysine. T332 contacts pyridoxal 5'-phosphate.

Belongs to the class-III pyridoxal-phosphate-dependent aminotransferase family. Putrescine aminotransferase subfamily. Pyridoxal 5'-phosphate serves as cofactor.

It carries out the reaction an alkane-alpha,omega-diamine + 2-oxoglutarate = an omega-aminoaldehyde + L-glutamate. The catalysed reaction is putrescine + 2-oxoglutarate = 1-pyrroline + L-glutamate + H2O. It catalyses the reaction cadaverine + 2-oxoglutarate = 5-aminopentanal + L-glutamate. It participates in amine and polyamine degradation; putrescine degradation; 4-aminobutanal from putrescine (transaminase route): step 1/1. Its function is as follows. Catalyzes the aminotransferase reaction from putrescine to 2-oxoglutarate, leading to glutamate and 4-aminobutanal, which spontaneously cyclizes to form 1-pyrroline. This is the first step in one of two pathways for putrescine degradation, where putrescine is converted into 4-aminobutanoate (gamma-aminobutyrate or GABA) via 4-aminobutanal. Also functions as a cadaverine transaminase in a a L-lysine degradation pathway to succinate that proceeds via cadaverine, glutarate and L-2-hydroxyglutarate. The protein is Putrescine aminotransferase of Salmonella agona (strain SL483).